Reading from the N-terminus, the 123-residue chain is Small ribosomal subunit protein uS12 (123 aa).

3-methylthioaspartic acid is present on Asp-89.

Belongs to the universal ribosomal protein uS12 family. Part of the 30S ribosomal subunit. Contacts proteins S8 and S17. May interact with IF1 in the 30S initiation complex.

With S4 and S5 plays an important role in translational accuracy. In terms of biological role, interacts with and stabilizes bases of the 16S rRNA that are involved in tRNA selection in the A site and with the mRNA backbone. Located at the interface of the 30S and 50S subunits, it traverses the body of the 30S subunit contacting proteins on the other side and probably holding the rRNA structure together. The combined cluster of proteins S8, S12 and S17 appears to hold together the shoulder and platform of the 30S subunit. The chain is Small ribosomal subunit protein uS12 from Geotalea uraniireducens (strain Rf4) (Geobacter uraniireducens).